We begin with the raw amino-acid sequence, 303 residues long: D-alanyl-D-alanine carboxypeptidase (303 aa).

The helical transmembrane segment at 7-23 threads the bilayer; that stretch reads LLLLLFLIYLGYDYVNE. The disordered stretch occupies residues 37-56; the sequence is DQNPKEHLENSGTSENTQEK. Substrate-binding positions include 154–156 and Ser161; that span reads YAL. Positions 163 and 170 each coordinate Zn(2+). Glu213 functions as the Proton donor/acceptor in the catalytic mechanism. Position 216 (His216) interacts with Zn(2+).

This sequence belongs to the peptidase M15B family. It depends on Zn(2+) as a cofactor.

The protein localises to the cell membrane. Its activity is regulated as follows. The DD-carboxypeptidase activity is not inhibited by beta-lactam antibiotics. In terms of biological role, cleaves the C-terminal D-alanine residue of UDP-muramyl-pentapeptide (UDP-MurNAc-L-Ala-D-Glu-mDAP-D-Ala-D-Ala) or diacetyl-L-Lys-D-Ala-D-Ala. However the physiological substrate likely contains L-Lys instead of mDAP at the third position of the pentapeptide. Also releases the C-terminal D-lactate from UDP-MurNAc-L-Ala-D-Glu-mDAP-D-Ala-D-lactate, a depsipeptide produced by the vancomycin resistance protein VanA. Therefore, VanY should contribute in vivo to the hydrolysis of both the D-alanyl-D-alanine- and the depsipeptide-containing peptidoglycan precursors. Is not necessary for vancomycin resistance of E.faecium BM4147 and perhaps not W14-9. Does not display transpeptidase or beta-lactamase activities. In Enterococcus faecium (Streptococcus faecium), this protein is D-alanyl-D-alanine carboxypeptidase.